A 521-amino-acid chain; its full sequence is Bifunctional purine biosynthesis protein PurH (521 aa).

The MGS-like domain occupies 1–145 (MIKQALISVS…KNHRDVTVVV (145 aa)).

It belongs to the PurH family.

It carries out the reaction (6R)-10-formyltetrahydrofolate + 5-amino-1-(5-phospho-beta-D-ribosyl)imidazole-4-carboxamide = 5-formamido-1-(5-phospho-D-ribosyl)imidazole-4-carboxamide + (6S)-5,6,7,8-tetrahydrofolate. The enzyme catalyses IMP + H2O = 5-formamido-1-(5-phospho-D-ribosyl)imidazole-4-carboxamide. It participates in purine metabolism; IMP biosynthesis via de novo pathway; 5-formamido-1-(5-phospho-D-ribosyl)imidazole-4-carboxamide from 5-amino-1-(5-phospho-D-ribosyl)imidazole-4-carboxamide (10-formyl THF route): step 1/1. The protein operates within purine metabolism; IMP biosynthesis via de novo pathway; IMP from 5-formamido-1-(5-phospho-D-ribosyl)imidazole-4-carboxamide: step 1/1. This chain is Bifunctional purine biosynthesis protein PurH, found in Paraburkholderia phytofirmans (strain DSM 17436 / LMG 22146 / PsJN) (Burkholderia phytofirmans).